The chain runs to 465 residues: ATP synthase subunit beta (465 aa).

149 to 156 (GGAGVGKT) serves as a coordination point for ATP.

This sequence belongs to the ATPase alpha/beta chains family. As to quaternary structure, F-type ATPases have 2 components, CF(1) - the catalytic core - and CF(0) - the membrane proton channel. CF(1) has five subunits: alpha(3), beta(3), gamma(1), delta(1), epsilon(1). CF(0) has three main subunits: a(1), b(2) and c(9-12). The alpha and beta chains form an alternating ring which encloses part of the gamma chain. CF(1) is attached to CF(0) by a central stalk formed by the gamma and epsilon chains, while a peripheral stalk is formed by the delta and b chains.

The protein localises to the cell inner membrane. The catalysed reaction is ATP + H2O + 4 H(+)(in) = ADP + phosphate + 5 H(+)(out). Its function is as follows. Produces ATP from ADP in the presence of a proton gradient across the membrane. The catalytic sites are hosted primarily by the beta subunits. In Dictyoglomus thermophilum (strain ATCC 35947 / DSM 3960 / H-6-12), this protein is ATP synthase subunit beta.